The chain runs to 512 residues: DEAD-box ATP-dependent RNA helicase 5 (512 aa).

Disordered stretches follow at residues 1–33 (MGRS…KLEA) and 45–76 (ATST…GGGK). Residues 14–45 (SRKSKKEKKSKKDKKRKLEAEAEVVVVEAAAA) adopt a coiled-coil conformation. Residues 16-30 (KSKKEKKSKKDKKRK) show a composition bias toward basic residues. Residues 94–120 (SSFAATALPPQVLDCCKGFERPSPIQA) carry the Q motif motif. A Helicase ATP-binding domain is found at 123–300 (WPYLLDGRDF…QEFMDPNPIK (178 aa)). 136–143 (AATGSGKT) serves as a coordination point for ATP. The DEAD box motif lies at 248–251 (DEAD). Positions 333-476 (LLDKYHKAQR…VVPPALTKFG (144 aa)) constitute a Helicase C-terminal domain.

Belongs to the DEAD box helicase family. DDX5/DBP2 subfamily.

The protein localises to the nucleus. It is found in the nucleolus. It catalyses the reaction ATP + H2O = ADP + phosphate + H(+). Functionally, ATP-dependent RNA helicase required for 60S ribosomal subunit synthesis. Involved in efficient pre-rRNA processing, predominantly at site A3, which is necessary for the normal formation of 25S and 5.8S rRNAs. In Oryza sativa subsp. japonica (Rice), this protein is DEAD-box ATP-dependent RNA helicase 5.